The following is a 285-amino-acid chain: Transcription factor JAMYB (285 aa).

2 consecutive HTH myb-type domains span residues 26 to 78 and 79 to 133; these read SAEL…LNYL and RPDV…QKHA. 2 DNA-binding regions (H-T-H motif) span residues 54–78 and 106–129; these read WNALARAAGLKRTGKSCRLRWLNYL and WSKIAQHLPGRTDNEIKNYWRTRV.

It localises to the nucleus. Its function is as follows. Probable transcription factor that may be involved in the jasmonate-dependent defense responses to the rice blast fungus Magnaporthe oryzae. Does not seem to function in the salicylic acid-dependent signaling pathway. This chain is Transcription factor JAMYB, found in Oryza sativa subsp. japonica (Rice).